Reading from the N-terminus, the 762-residue chain is 5-methyltetrahydropteroyltriglutamate--homocysteine methyltransferase (762 aa).

5-methyltetrahydropteroyltri-L-glutamate-binding positions include 17–20 and Lys111; that span reads REWK. Residues 435-437 and Glu488 each bind L-homocysteine; that span reads IGS. L-methionine-binding positions include 435–437 and Glu488; that span reads IGS. 5-methyltetrahydropteroyltri-L-glutamate is bound by residues 519–520 and Trp565; that span reads RC. Asp603 is an L-homocysteine binding site. Asp603 provides a ligand contact to L-methionine. Residue Glu609 coordinates 5-methyltetrahydropteroyltri-L-glutamate. His645, Cys647, and Glu669 together coordinate Zn(2+). The active-site Proton donor is the His698. A Zn(2+)-binding site is contributed by Cys730.

It belongs to the vitamin-B12 independent methionine synthase family. The cofactor is Zn(2+).

The catalysed reaction is 5-methyltetrahydropteroyltri-L-glutamate + L-homocysteine = tetrahydropteroyltri-L-glutamate + L-methionine. The protein operates within amino-acid biosynthesis; L-methionine biosynthesis via de novo pathway; L-methionine from L-homocysteine (MetE route): step 1/1. In terms of biological role, catalyzes the transfer of a methyl group from 5-methyltetrahydrofolate to homocysteine resulting in methionine formation. In Bacillus anthracis (strain CDC 684 / NRRL 3495), this protein is 5-methyltetrahydropteroyltriglutamate--homocysteine methyltransferase.